We begin with the raw amino-acid sequence, 269 residues long: Ribonuclease HII (269 aa).

Residues Arg-61–Glu-250 form the RNase H type-2 domain. Positions 67, 68, and 158 each coordinate a divalent metal cation.

This sequence belongs to the RNase HII family. It depends on Mn(2+) as a cofactor. Mg(2+) is required as a cofactor.

It localises to the cytoplasm. It carries out the reaction Endonucleolytic cleavage to 5'-phosphomonoester.. Endonuclease that specifically degrades the RNA of RNA-DNA hybrids. The protein is Ribonuclease HII of Parvibaculum lavamentivorans (strain DS-1 / DSM 13023 / NCIMB 13966).